The primary structure comprises 235 residues: Phosphoribosylaminoimidazole-succinocarboxamide synthase (235 aa).

The protein belongs to the SAICAR synthetase family.

The catalysed reaction is 5-amino-1-(5-phospho-D-ribosyl)imidazole-4-carboxylate + L-aspartate + ATP = (2S)-2-[5-amino-1-(5-phospho-beta-D-ribosyl)imidazole-4-carboxamido]succinate + ADP + phosphate + 2 H(+). It participates in purine metabolism; IMP biosynthesis via de novo pathway; 5-amino-1-(5-phospho-D-ribosyl)imidazole-4-carboxamide from 5-amino-1-(5-phospho-D-ribosyl)imidazole-4-carboxylate: step 1/2. This Thermoanaerobacter pseudethanolicus (strain ATCC 33223 / 39E) (Clostridium thermohydrosulfuricum) protein is Phosphoribosylaminoimidazole-succinocarboxamide synthase.